The chain runs to 1168 residues: Carboxylic acid reductase (1168 aa).

Residues His-290, Ser-385, 407–408 (EG), Thr-412, Asp-485, 497–500 (YLDR), Lys-506, and Lys-606 contribute to the AMP site. In terms of domain architecture, Carrier spans 645–720 (APVLPTLCRA…ALADHIEAAR (76 aa)). At Ser-679 the chain carries O-(pantetheine 4'-phosphoryl)serine. NADP(+) is bound by residues 777–780 (TGFL), Arg-804, Arg-814, 844–845 (DK), 870–872 (PAA), Ser-910, Tyr-946, and Lys-950.

Belongs to the ATP-dependent AMP-binding enzyme family. Carboxylic acid reductase subfamily. The cofactor is pantetheine 4'-phosphate.

It carries out the reaction a carboxylate + ATP + NADPH + H(+) = an aldehyde + AMP + diphosphate + NADP(+). The enzyme catalyses a medium-chain fatty acid + ATP + H(+) = a medium-chain fatty acyl-AMP + diphosphate. The catalysed reaction is a long-chain fatty acid + ATP + H(+) = a long-chain fatty acyl-AMP + diphosphate. It catalyses the reaction dodecanoate + ATP + H(+) = dodecanoyl-AMP + diphosphate. It carries out the reaction hexadecanoate + ATP + H(+) = hexadecanoyl-AMP + diphosphate. Functionally, catalyzes the ATP- and NADPH-dependent reduction of carboxylic acids to the corresponding aldehydes. In vitro, also catalyzes the activation of medium/long-chain fatty acids as acyl-adenylates (acyl-AMP). The sequence is that of Carboxylic acid reductase from Mycobacterium tuberculosis (strain ATCC 25618 / H37Rv).